A 20-amino-acid chain; its full sequence is Venom prothrombin activator notanarin-D (20 aa).

The 10-residue stretch at 1 to 10 folds into the Gla domain; the sequence is SNSLFEEVRP. 4-carboxyglutamate is present on residues glutamate 6 and glutamate 7. A Peptidase S1 domain is found at 11–20; the sequence is IVNGMDCKLG.

The protein belongs to the peptidase S1 family. Snake venom subfamily. As to quaternary structure, heterodimer of a light chain and a heavy chain; disulfide-linked. In terms of processing, gamma-carboxyglutamate residues are formed by vitamin K dependent carboxylation. These residues are essential for the binding of calcium. As to expression, expressed by the venom gland.

The protein resides in the secreted. It catalyses the reaction Selective cleavage of Arg-|-Thr and then Arg-|-Ile bonds in prothrombin to form thrombin.. In terms of biological role, snake prothrombin activator that attacks the hemostatic system of prey. This protein is functionally similar to blood coagulation factor Xa. The protein is Venom prothrombin activator notanarin-D of Notechis scutatus niger (Peninsula tiger snake).